The following is a 276-amino-acid chain: Shikimate dehydrogenase (NADP(+)) (276 aa).

Shikimate is bound by residues Ser-18 to Ser-20 and Thr-65. Lys-69 acts as the Proton acceptor in catalysis. Residues Asn-90 and Asp-106 each contribute to the shikimate site. NADP(+)-binding positions include Gly-132 to Ala-136 and Ile-221. A shikimate-binding site is contributed by Tyr-223. Gly-244 provides a ligand contact to NADP(+).

This sequence belongs to the shikimate dehydrogenase family. In terms of assembly, homodimer.

It carries out the reaction shikimate + NADP(+) = 3-dehydroshikimate + NADPH + H(+). It functions in the pathway metabolic intermediate biosynthesis; chorismate biosynthesis; chorismate from D-erythrose 4-phosphate and phosphoenolpyruvate: step 4/7. Functionally, involved in the biosynthesis of the chorismate, which leads to the biosynthesis of aromatic amino acids. Catalyzes the reversible NADPH linked reduction of 3-dehydroshikimate (DHSA) to yield shikimate (SA). In Paramagnetospirillum magneticum (strain ATCC 700264 / AMB-1) (Magnetospirillum magneticum), this protein is Shikimate dehydrogenase (NADP(+)).